Reading from the N-terminus, the 156-residue chain is Small ribosomal subunit protein uS7 (156 aa).

The protein belongs to the universal ribosomal protein uS7 family. Part of the 30S ribosomal subunit. Contacts proteins S9 and S11.

Functionally, one of the primary rRNA binding proteins, it binds directly to 16S rRNA where it nucleates assembly of the head domain of the 30S subunit. Is located at the subunit interface close to the decoding center, probably blocks exit of the E-site tRNA. The protein is Small ribosomal subunit protein uS7 of Tremblaya princeps.